Here is a 418-residue protein sequence, read N- to C-terminus: Gamma-glutamyl phosphate reductase (418 aa).

The protein belongs to the gamma-glutamyl phosphate reductase family.

The protein localises to the cytoplasm. It catalyses the reaction L-glutamate 5-semialdehyde + phosphate + NADP(+) = L-glutamyl 5-phosphate + NADPH + H(+). It participates in amino-acid biosynthesis; L-proline biosynthesis; L-glutamate 5-semialdehyde from L-glutamate: step 2/2. Functionally, catalyzes the NADPH-dependent reduction of L-glutamate 5-phosphate into L-glutamate 5-semialdehyde and phosphate. The product spontaneously undergoes cyclization to form 1-pyrroline-5-carboxylate. The polypeptide is Gamma-glutamyl phosphate reductase (Pelodictyon phaeoclathratiforme (strain DSM 5477 / BU-1)).